Here is a 25-residue protein sequence, read N- to C-terminus: uncharacterized protein (25 aa).

The protein resides in the plastid. It localises to the chloroplast. This is an uncharacterized protein from Trieres chinensis (Marine centric diatom).